A 218-amino-acid polypeptide reads, in one-letter code: Protein GrpE (218 aa).

2 stretches are compositionally biased toward basic and acidic residues: residues 1-13 (MSKNNENIKHQNN) and 20-32 (VDKKETKNHNKQE). The tract at residues 1 to 32 (MSKNNENIKHQNNDKVNNQVDKKETKNHNKQE) is disordered.

Belongs to the GrpE family. Homodimer.

It localises to the cytoplasm. Participates actively in the response to hyperosmotic and heat shock by preventing the aggregation of stress-denatured proteins, in association with DnaK and GrpE. It is the nucleotide exchange factor for DnaK and may function as a thermosensor. Unfolded proteins bind initially to DnaJ; upon interaction with the DnaJ-bound protein, DnaK hydrolyzes its bound ATP, resulting in the formation of a stable complex. GrpE releases ADP from DnaK; ATP binding to DnaK triggers the release of the substrate protein, thus completing the reaction cycle. Several rounds of ATP-dependent interactions between DnaJ, DnaK and GrpE are required for fully efficient folding. The chain is Protein GrpE from Ureaplasma parvum serovar 3 (strain ATCC 27815 / 27 / NCTC 11736).